We begin with the raw amino-acid sequence, 240 residues long: Citrate synthase-lysine N-methyltransferase CSKMT, mitochondrial (240 aa).

The N-terminal 21 residues, 1 to 21 (MAALRRMLHLPRLTMGTCRPF), are a transit peptide targeting the mitochondrion.

Belongs to the methyltransferase superfamily.

The protein resides in the mitochondrion. It catalyses the reaction L-lysyl-[citrate synthase] + S-adenosyl-L-methionine = N(6)-methyl-L-lysyl-[citrate synthase] + S-adenosyl-L-homocysteine + H(+). It carries out the reaction N(6)-methyl-L-lysyl-[citrate synthase] + S-adenosyl-L-methionine = N(6),N(6)-dimethyl-L-lysyl-[citrate synthase] + S-adenosyl-L-homocysteine + H(+). The enzyme catalyses N(6),N(6)-dimethyl-L-lysyl-[citrate synthase] + S-adenosyl-L-methionine = N(6),N(6),N(6)-trimethyl-L-lysyl-[citrate synthase] + S-adenosyl-L-homocysteine + H(+). With respect to regulation, citrate synthase-lysine methyltransferase activity is inhibited by S-adenosylhomocysteine (AdoHcy) and oxaloacetate (OAA). Its function is as follows. Protein-lysine methyltransferase that selectively trimethylates citrate synthase (CS) in mitochondria. Seems to conduct trimethylation in a highly distributive manner rather than in a processive manner, and thus introduces a single methyl group per binding event. The chain is Citrate synthase-lysine N-methyltransferase CSKMT, mitochondrial from Pongo abelii (Sumatran orangutan).